Reading from the N-terminus, the 161-residue chain is Abscisic acid receptor PYL11 (161 aa).

The segment at 3-154 is START-like; it reads TSQKYHTCGS…NLKSLAKLSE (152 aa). Abscisate contacts are provided by residues Lys-39, 68–73, 95–101, and Glu-119; these read AEFSRE and RLVNYRS. The Gate loop motif lies at 64–68; that stretch reads SGLPA. The short motif at 94 to 96 is the Latch loop element; the sequence is HRL.

Belongs to the PYR/PYL/RCAR abscisic acid intracellular receptor family. As to quaternary structure, homodimer. Binds ABA on one subunit only. Interacts with PP2Cs. Binds to CARs protein in an ABA-independent manner, both at the plasma membrane and in the nucleus. Interacts with I-2 and TOPP1.

The protein localises to the cytoplasm. The protein resides in the nucleus. It localises to the cell membrane. Receptor for abscisic acid (ABA) required for ABA-mediated responses such as stomatal closure and germination inhibition. Inhibits the activity of group-A protein phosphatases type 2C (PP2Cs) when activated by ABA. Suppresses the phosphatase activity of TOPP1 in a dose-dependent manner in vitro. This chain is Abscisic acid receptor PYL11 (PYL11), found in Arabidopsis thaliana (Mouse-ear cress).